Consider the following 259-residue polypeptide: 3-deoxy-manno-octulosonate cytidylyltransferase 1 (259 aa).

Belongs to the KdsB family.

It is found in the cytoplasm. It catalyses the reaction 3-deoxy-alpha-D-manno-oct-2-ulosonate + CTP = CMP-3-deoxy-beta-D-manno-octulosonate + diphosphate. Its pathway is nucleotide-sugar biosynthesis; CMP-3-deoxy-D-manno-octulosonate biosynthesis; CMP-3-deoxy-D-manno-octulosonate from 3-deoxy-D-manno-octulosonate and CTP: step 1/1. It functions in the pathway bacterial outer membrane biogenesis; lipopolysaccharide biosynthesis. Its function is as follows. Activates KDO (a required 8-carbon sugar) for incorporation into bacterial lipopolysaccharide in Gram-negative bacteria. In Hydrogenovibrio crunogenus (strain DSM 25203 / XCL-2) (Thiomicrospira crunogena), this protein is 3-deoxy-manno-octulosonate cytidylyltransferase 1.